The following is a 297-amino-acid chain: Pyrroline-5-carboxylate reductase 1 (297 aa).

This sequence belongs to the pyrroline-5-carboxylate reductase family.

The protein localises to the cytoplasm. The catalysed reaction is L-proline + NADP(+) = (S)-1-pyrroline-5-carboxylate + NADPH + 2 H(+). It carries out the reaction L-proline + NAD(+) = (S)-1-pyrroline-5-carboxylate + NADH + 2 H(+). It participates in amino-acid biosynthesis; L-proline biosynthesis; L-proline from L-glutamate 5-semialdehyde: step 1/1. Its function is as follows. Catalyzes the reduction of 1-pyrroline-5-carboxylate (PCA) to L-proline. This chain is Pyrroline-5-carboxylate reductase 1 (proH), found in Bacillus spizizenii (strain ATCC 23059 / NRRL B-14472 / W23) (Bacillus subtilis subsp. spizizenii).